We begin with the raw amino-acid sequence, 400 residues long: Capsid protein (400 aa).

Positions 1-10 are enriched in polar residues; the sequence is MDPNLDQDTL. Positions 1-54 are disordered; sequence MDPNLDQDTLPTHEEIDNDVDSAEEEPPEPPLLPDDIDDDDSHGSRTRRQVKPP. The segment covering 16–28 has biased composition (acidic residues); it reads IDNDVDSAEEEPP.

Belongs to the potexvirus capsid protein family.

It is found in the virion. Functionally, required for genome encapsidation. The sequence is that of Capsid protein (ORF3) from Botryotinia fuckeliana (Noble rot fungus).